The chain runs to 382 residues: Alpha-methylacyl-CoA racemase (382 aa).

Substrate contacts are provided by residues Arg-36 and 55-58 (LDLK). Lys-58 is modified (N6-acetyllysine). At Lys-87 the chain carries N6-acetyllysine; alternate. Lys-87 is modified (N6-succinyllysine; alternate). Residue 121 to 126 (GHDINY) coordinates substrate. His-122 serves as the catalytic Proton acceptor. The active-site Proton donor is the Asp-152. At Lys-268 the chain carries N6-succinyllysine. The Microbody targeting signal motif lies at 380–382 (ASL).

It belongs to the CoA-transferase III family. As to quaternary structure, monomer.

Its subcellular location is the peroxisome. The protein resides in the mitochondrion. It carries out the reaction a (2S)-2-methylacyl-CoA = a (2R)-2-methylacyl-CoA. The enzyme catalyses (25R)-3alpha,7alpha,12alpha-trihydroxy-5beta-cholestan-26-oyl-CoA = (25S)-3alpha,7alpha,12alpha-trihydroxy-5beta-cholestan-26-oyl-CoA. The catalysed reaction is (2R,6)-dimethylheptanoyl-CoA = (2S,6)-dimethylheptanoyl-CoA. The protein operates within lipid metabolism; bile acid biosynthesis. It participates in lipid metabolism; fatty acid metabolism. Catalyzes the interconversion of (R)- and (S)-stereoisomers of alpha-methyl-branched-chain fatty acyl-CoA esters. Acts only on coenzyme A thioesters, not on free fatty acids, and accepts as substrates a wide range of alpha-methylacyl-CoAs, including pristanoyl-CoA, trihydroxycoprostanoyl-CoA (an intermediate in bile acid synthesis), and arylpropionic acids like the anti-inflammatory drug ibuprofen (2-(4-isobutylphenyl)propionic acid) but neither 3-methyl-branched nor linear-chain acyl-CoAs. The chain is Alpha-methylacyl-CoA racemase (AMACR) from Homo sapiens (Human).